Consider the following 240-residue polypeptide: Endonuclease V (240 aa).

Residues Asp46 and Asp116 each contribute to the Mg(2+) site.

It belongs to the endonuclease V family. It depends on Mg(2+) as a cofactor.

It localises to the cytoplasm. The catalysed reaction is Endonucleolytic cleavage at apurinic or apyrimidinic sites to products with a 5'-phosphate.. Functionally, DNA repair enzyme involved in the repair of deaminated bases. Selectively cleaves double-stranded DNA at the second phosphodiester bond 3' to a deoxyinosine leaving behind the intact lesion on the nicked DNA. This chain is Endonuclease V, found in Rhodospirillum centenum (strain ATCC 51521 / SW).